We begin with the raw amino-acid sequence, 247 residues long: 5'-nucleotidase SurE (247 aa).

Positions 8, 9, 39, and 91 each coordinate a divalent metal cation.

This sequence belongs to the SurE nucleotidase family. A divalent metal cation is required as a cofactor.

The protein localises to the cytoplasm. The enzyme catalyses a ribonucleoside 5'-phosphate + H2O = a ribonucleoside + phosphate. Functionally, nucleotidase that shows phosphatase activity on nucleoside 5'-monophosphates. The polypeptide is 5'-nucleotidase SurE (Aromatoleum aromaticum (strain DSM 19018 / LMG 30748 / EbN1) (Azoarcus sp. (strain EbN1))).